Here is a 155-residue protein sequence, read N- to C-terminus: Ribonuclease H (155 aa).

Positions 1–142 constitute an RNase H type-1 domain; sequence MLKQVEIFTD…CDELARAAAS (142 aa). Residues Asp10, Glu48, Asp70, and Asp134 each coordinate Mg(2+).

The protein belongs to the RNase H family. In terms of assembly, monomer. The cofactor is Mg(2+).

The protein localises to the cytoplasm. The catalysed reaction is Endonucleolytic cleavage to 5'-phosphomonoester.. In terms of biological role, endonuclease that specifically degrades the RNA of RNA-DNA hybrids. This chain is Ribonuclease H, found in Klebsiella pneumoniae subsp. pneumoniae (strain ATCC 700721 / MGH 78578).